Here is a 577-residue protein sequence, read N- to C-terminus: Protein NUCLEOLAR COMPLEX ASSOCIATED 4 (577 aa).

The disordered stretch occupies residues 230–263 (PEKQAEKSQHEMWSGSDESISEKPTDKKKKTEKG). 3 helical membrane-spanning segments follow: residues 329–349 (IGGV…TQHG), 350–370 (LEYP…VFVA), and 404–424 (LSLS…YNLL).

It belongs to the CBF/MAK21 family. As to quaternary structure, component of the ribosomal small subunit (SSU) processome composed of at least 40 protein subunits and snoRNA U3. As to expression, mostly expressed in flowers and stems and at lower levels in roots, hypocotyls, siliques, leaves and seeds.

The protein resides in the nucleus membrane. It is found in the nucleus. It localises to the nucleolus. In terms of biological role, essential protein required during embryogenesis. Involved in nucleolar processing of ribosomal RNA (rRNA) 40S and 90S ribosomal subunits and ribosome assembly; early in ribosome biogenesis, especially required during the maturation of 5.8S rRNA. Has a role in the nuclear export of 40S pre-ribosomal subunit to the cytoplasm. The polypeptide is Protein NUCLEOLAR COMPLEX ASSOCIATED 4 (Arabidopsis thaliana (Mouse-ear cress)).